A 379-amino-acid chain; its full sequence is Succinyl-diaminopimelate desuccinylase (379 aa).

His-70 is a binding site for Zn(2+). The active site involves Asp-72. A Zn(2+)-binding site is contributed by Asp-103. Glu-137 acts as the Proton acceptor in catalysis. Zn(2+)-binding residues include Glu-138, Glu-166, and His-352.

The protein belongs to the peptidase M20A family. DapE subfamily. Homodimer. The cofactor is Zn(2+). Requires Co(2+) as cofactor.

It carries out the reaction N-succinyl-(2S,6S)-2,6-diaminopimelate + H2O = (2S,6S)-2,6-diaminopimelate + succinate. It participates in amino-acid biosynthesis; L-lysine biosynthesis via DAP pathway; LL-2,6-diaminopimelate from (S)-tetrahydrodipicolinate (succinylase route): step 3/3. In terms of biological role, catalyzes the hydrolysis of N-succinyl-L,L-diaminopimelic acid (SDAP), forming succinate and LL-2,6-diaminopimelate (DAP), an intermediate involved in the bacterial biosynthesis of lysine and meso-diaminopimelic acid, an essential component of bacterial cell walls. The chain is Succinyl-diaminopimelate desuccinylase from Burkholderia multivorans (strain ATCC 17616 / 249).